The chain runs to 121 residues: Nitrogenase-stabilizing/protective protein NifW (121 aa).

Belongs to the NifW family. Homotrimer; associates with NifD.

Its function is as follows. May protect the nitrogenase Fe-Mo protein from oxidative damage. In Methylacidiphilum infernorum (isolate V4) (Methylokorus infernorum (strain V4)), this protein is Nitrogenase-stabilizing/protective protein NifW.